A 352-amino-acid chain; its full sequence is MRKIIHVDMDCFFAAVEMRDNPALRDVPIAIGGSRVKRGVISTANYPARKFGVRSAMPTAMALKLCPHLILLPGRFDAYKEASVRIQEIFSRYTSLIEPLSLDEAYLDVTDSLHCHGSATLMAQEIRQTISDELNLTASAGIAPVKFLAKIASDLNKPNGQYVITPDEVPHFLKTLPLSKIPGVGKVSAAKLENLGLRTCEDVQKSDLAMLLKRFGKFGRVLWERSQGIDERSINNERLRKSVGVERTLADDIHDWSDCETIITEQLYPELERRLAKVKPDLLIARQGVKLKFNDFQQTTQEHVWPKLNKDDLIATAKKTWQERRAGRGVRLVGLHVTLLDPQLERQLVLGL.

Residues I4–G185 form the UmuC domain. The Mg(2+) site is built by D8 and D103. E104 is a catalytic residue.

This sequence belongs to the DNA polymerase type-Y family. Monomer. Mg(2+) is required as a cofactor.

The protein localises to the cytoplasm. It catalyses the reaction DNA(n) + a 2'-deoxyribonucleoside 5'-triphosphate = DNA(n+1) + diphosphate. Functionally, poorly processive, error-prone DNA polymerase involved in untargeted mutagenesis. Copies undamaged DNA at stalled replication forks, which arise in vivo from mismatched or misaligned primer ends. These misaligned primers can be extended by PolIV. Exhibits no 3'-5' exonuclease (proofreading) activity. May be involved in translesional synthesis, in conjunction with the beta clamp from PolIII. This chain is DNA polymerase IV, found in Enterobacter sp. (strain 638).